The sequence spans 610 residues: Zinc metalloproteinase-disintegrin-like brevilysin H6 (610 aa).

Residues 1–20 (MIQVLLVTICLAAFPYQGSS) form the signal peptide. Residues 21 to 191 (IILESGNVND…ASQLNLTPEQ (171 aa)) constitute a propeptide that is removed on maturation. Gln192 bears the Pyrrolidone carboxylic acid mark. Positions 198 to 394 (RFVELVLVAD…HNPECIVNEP (197 aa)) constitute a Peptidase M12B domain. Residues Glu201 and Asp285 each coordinate Ca(2+). Cystine bridges form between Cys309–Cys389, Cys349–Cys373, Cys351–Cys356, and Cys373–Cys378. Residue His334 coordinates Zn(2+). Residue Glu335 is part of the active site. The Zn(2+) site is built by His338 and His344. Asn372 carries N-linked (GlcNAc...) asparagine glycosylation. The Ca(2+) site is built by Cys389, Asn392, Val404, Asn407, Leu409, Glu411, Glu414, and Asp417. The 87-residue stretch at 402 to 488 (PPVCGNELLE…ECPADVFHKN (87 aa)) folds into the Disintegrin domain. Disulfide bonds link Cys405/Cys424, Cys405/Cys434, Cys416/Cys429, Cys416/Cys434, Cys418/Cys424, Cys428/Cys451, Cys442/Cys448, Cys447/Cys473, Cys460/Cys480, Cys467/Cys492, Cys467/Cys499, Cys492/Cys504, Cys499/Cys504, Cys511/Cys526, Cys511/Cys561, Cys526/Cys572, Cys539/Cys549, Cys549/Cys556, Cys556/Cys598, Cys561/Cys572, Cys592/Cys603, and Cys598/Cys603. The D/ECD-tripeptide motif lies at 466 to 468 (ECD). Positions 468, 469, 471, 483, and 484 each coordinate Ca(2+).

Belongs to the venom metalloproteinase (M12B) family. P-III subfamily. P-IIIb sub-subfamily. As to quaternary structure, monomer. It depends on Zn(2+) as a cofactor. Post-translationally, in the absence of calcium ions, is autocatalytically degraded giving 29 (p29K) and 45 kDa (p45K) fragments. In presence of calcium ions, the p45K is not detected. Expressed by the venom gland.

Its subcellular location is the secreted. Inhibited by chelating agents. Calcium ions enhance its activity, they also suppress autoproteolysis, and contribute to the stability of the enzyme against pH, heating, urea and cysteine. Functionally, shows weak hemorrhagic activity. Rapidly degrades the alpha-chain of fibrinogen (FGA). The protein is Zinc metalloproteinase-disintegrin-like brevilysin H6 of Gloydius brevicauda (Korean slamosa snake).